The primary structure comprises 317 residues: Methionyl-tRNA formyltransferase (317 aa).

(6S)-5,6,7,8-tetrahydrofolate is bound at residue 112 to 115 (SILP).

The protein belongs to the Fmt family.

It catalyses the reaction L-methionyl-tRNA(fMet) + (6R)-10-formyltetrahydrofolate = N-formyl-L-methionyl-tRNA(fMet) + (6S)-5,6,7,8-tetrahydrofolate + H(+). In terms of biological role, attaches a formyl group to the free amino group of methionyl-tRNA(fMet). The formyl group appears to play a dual role in the initiator identity of N-formylmethionyl-tRNA by promoting its recognition by IF2 and preventing the misappropriation of this tRNA by the elongation apparatus. This Mannheimia succiniciproducens (strain KCTC 0769BP / MBEL55E) protein is Methionyl-tRNA formyltransferase.